The following is a 189-amino-acid chain: Xanthine phosphoribosyltransferase (189 aa).

2 residues coordinate xanthine: Leu20 and Asn27. Ala128–Ala132 is a binding site for 5-phospho-alpha-D-ribose 1-diphosphate. Position 156 (Lys156) interacts with xanthine.

This sequence belongs to the purine/pyrimidine phosphoribosyltransferase family. Xpt subfamily. Homodimer.

The protein resides in the cytoplasm. The catalysed reaction is XMP + diphosphate = xanthine + 5-phospho-alpha-D-ribose 1-diphosphate. The protein operates within purine metabolism; XMP biosynthesis via salvage pathway; XMP from xanthine: step 1/1. Converts the preformed base xanthine, a product of nucleic acid breakdown, to xanthosine 5'-monophosphate (XMP), so it can be reused for RNA or DNA synthesis. This Lactobacillus delbrueckii subsp. bulgaricus (strain ATCC 11842 / DSM 20081 / BCRC 10696 / JCM 1002 / NBRC 13953 / NCIMB 11778 / NCTC 12712 / WDCM 00102 / Lb 14) protein is Xanthine phosphoribosyltransferase.